The chain runs to 506 residues: Putative basic amino acid antiporter YfcC (506 aa).

The next 13 membrane-spanning stretches (helical) occupy residues 19-39 (LVII…VPVG), 107-127 (GTAV…GIVM), 148-168 (ILFI…FGMG), 171-191 (AVAF…DSIT), 208-228 (WMNP…VLSG), 231-251 (LRIV…MVYA), 287-307 (WLVL…VIVN), 310-330 (FIPE…IIGV), 352-372 (MMIA…LVGN), 398-418 (AVAA…VTSG), 419-439 (SGQA…VGVN), 442-462 (VTVL…PTSA), and 485-505 (LLGL…LMGY).

This sequence to H.influenzae HI_0594. The protein to B.subtilis YcgA.

The protein localises to the cell inner membrane. Its function is as follows. Metabolomic profiling of different yfcC over-expression and deletion strains suggests that it may affect the glyoxylate shunt. This Escherichia coli (strain K12) protein is Putative basic amino acid antiporter YfcC (yfcC).